A 308-amino-acid polypeptide reads, in one-letter code: D-alanine--D-alanine ligase (308 aa).

In terms of domain architecture, ATP-grasp spans 106–305; that stretch reads KMLWKAFGLP…FEQLVVKILE (200 aa). An ATP-binding site is contributed by 136-191; the sequence is VEKLGLPLMVKPSLEGSSVGLTKVNAIDDLKSAVEFALQYDETVLIEEWLSGDELT. The Mg(2+) site is built by Asp-259, Glu-272, and Asn-274.

The protein belongs to the D-alanine--D-alanine ligase family. Mg(2+) serves as cofactor. The cofactor is Mn(2+).

The protein localises to the cytoplasm. It carries out the reaction 2 D-alanine + ATP = D-alanyl-D-alanine + ADP + phosphate + H(+). It functions in the pathway cell wall biogenesis; peptidoglycan biosynthesis. Functionally, cell wall formation. The protein is D-alanine--D-alanine ligase of Histophilus somni (strain 2336) (Haemophilus somnus).